The sequence spans 246 residues: Sulfate transporter CysZ (246 aa).

A run of 4 helical transmembrane segments spans residues 24–44 (LFVL…IGFA), 69–89 (IVWP…FTMV), 148–168 (LLVL…WILF), and 214–234 (LLIP…ATLF).

It belongs to the CysZ family.

It localises to the cell inner membrane. Its function is as follows. High affinity, high specificity proton-dependent sulfate transporter, which mediates sulfate uptake. Provides the sulfur source for the cysteine synthesis pathway. The protein is Sulfate transporter CysZ of Pseudomonas aeruginosa (strain ATCC 15692 / DSM 22644 / CIP 104116 / JCM 14847 / LMG 12228 / 1C / PRS 101 / PAO1).